The primary structure comprises 65 residues: TICYNHLTRTSETTEICPDSWYFCYKISLADGNDVRIKRGCTFTCPELRPTGIYVYCCRRDKCNQ.

4 cysteine pairs are disulfide-bonded: Cys3/Cys24, Cys17/Cys41, Cys45/Cys57, and Cys58/Cys63.

In terms of assembly, homodimer; non-covalently linked. As to expression, expressed by the venom gland.

Its subcellular location is the secreted. In terms of biological role, antagonist of muscle and neuronal nicotinic acetylcholine receptors (nAChR) with highest affinity for neuronal alpha-7/CHRNA7 nAChRs. The protein is Muscarinic toxin-like protein 3 of Naja kaouthia (Monocled cobra).